The sequence spans 168 residues: Lipoprotein signal peptidase (168 aa).

3 helical membrane-spanning segments follow: residues 8 to 28, 61 to 81, and 91 to 111; these read LYYLLAFVVILIDQWTKWLVV, GQFWLFYLITIVVVVGIVIYI, and FGIALGLMLGGALGNFIDRIF. Residues Asp117 and Asp135 contribute to the active site. Residues 128 to 148 form a helical membrane-spanning segment; sequence FPIFNVADAALTIGVALMFIY.

It belongs to the peptidase A8 family.

The protein localises to the cell membrane. It catalyses the reaction Release of signal peptides from bacterial membrane prolipoproteins. Hydrolyzes -Xaa-Yaa-Zaa-|-(S,diacylglyceryl)Cys-, in which Xaa is hydrophobic (preferably Leu), and Yaa (Ala or Ser) and Zaa (Gly or Ala) have small, neutral side chains.. Its pathway is protein modification; lipoprotein biosynthesis (signal peptide cleavage). Its function is as follows. This protein specifically catalyzes the removal of signal peptides from prolipoproteins. In Anoxybacillus flavithermus (strain DSM 21510 / WK1), this protein is Lipoprotein signal peptidase.